A 324-amino-acid polypeptide reads, in one-letter code: 26S proteasome regulatory subunit rpn8 (324 aa).

The 135-residue stretch at 17 to 151 folds into the MPN domain; it reads VIVHPLVLLS…TNAYFAIDEI (135 aa).

The protein belongs to the peptidase M67A family.

In terms of biological role, acts as a regulatory subunit of the 26S proteasome which is involved in the ATP-dependent degradation of ubiquitinated proteins. This is 26S proteasome regulatory subunit rpn8 (rpn8) from Schizosaccharomyces pombe (strain 972 / ATCC 24843) (Fission yeast).